The chain runs to 1503 residues: DNA-directed RNA polymerase subunit beta' (1503 aa).

Zn(2+) is bound by residues Cys-71, Cys-73, Cys-86, and Cys-89. 3 residues coordinate Mg(2+): Asp-470, Asp-472, and Asp-474. Residues Cys-800, Cys-874, Cys-881, and Cys-884 each contribute to the Zn(2+) site.

Belongs to the RNA polymerase beta' chain family. The RNAP catalytic core consists of 2 alpha, 1 beta, 1 beta' and 1 omega subunit. When a sigma factor is associated with the core the holoenzyme is formed, which can initiate transcription. The cofactor is Mg(2+). Zn(2+) serves as cofactor.

The enzyme catalyses RNA(n) + a ribonucleoside 5'-triphosphate = RNA(n+1) + diphosphate. Functionally, DNA-dependent RNA polymerase catalyzes the transcription of DNA into RNA using the four ribonucleoside triphosphates as substrates. The sequence is that of DNA-directed RNA polymerase subunit beta' from Sulfurimonas denitrificans (strain ATCC 33889 / DSM 1251) (Thiomicrospira denitrificans (strain ATCC 33889 / DSM 1251)).